Consider the following 245-residue polypeptide: tRNA1(Val) (adenine(37)-N6)-methyltransferase (245 aa).

It belongs to the methyltransferase superfamily. tRNA (adenine-N(6)-)-methyltransferase family.

The protein resides in the cytoplasm. The enzyme catalyses adenosine(37) in tRNA1(Val) + S-adenosyl-L-methionine = N(6)-methyladenosine(37) in tRNA1(Val) + S-adenosyl-L-homocysteine + H(+). In terms of biological role, specifically methylates the adenine in position 37 of tRNA(1)(Val) (anticodon cmo5UAC). The protein is tRNA1(Val) (adenine(37)-N6)-methyltransferase of Erwinia tasmaniensis (strain DSM 17950 / CFBP 7177 / CIP 109463 / NCPPB 4357 / Et1/99).